The chain runs to 298 residues: MIRVACVGITVMDRIYYVEGLPTESGKYVARNYTEVGGGPAATAAVAAARLGAQVDFIGRVGDDDTGNSLLAELESWGVNTRYTKRYNQAKSSQSAIMVDTKGERIIINYPSPDLLPDAEWLEEIDFSQWDVVLADVRWHDGAKKAFTLARQAGVMTVLDGDITPQDISELVALSDHAAFSEPGLARLTGVKEMASALKQAQTLTNGHVYVTQGSAGCDWLENGGRQHQPAFKVDVVDTTGAGDVFHGALAVALATSGDLAESVRFASGVAALKCTRPGGRAGIPDCDQTRSFLSLFV.

6-deoxy-6-sulfo-D-fructose contacts are provided by Asp13, Lys27, Gly39, Ser95, and Arg138. ATP is bound by residues Thr212, Gly214, Gly217, and Gly243. Residue Asp244 participates in 6-deoxy-6-sulfo-D-fructose binding.

This sequence belongs to the carbohydrate kinase PfkB family. Homodimer.

The enzyme catalyses 6-deoxy-6-sulfo-D-fructose + ATP = 6-deoxy-6-sulfo-D-fructose 1-phosphate + ADP + H(+). Its activity is regulated as follows. Strongly inhibited by ADP. Activated by sulfoquinovose (SQ), sulfolactaldehyde (SLA) and dihydroxyacetone phosphate (DHAP) (through effects on KM) and by fructose 6-phosphate (F6P), fructose bisphosphate (FBP), phosphoenolpyruvate (PEP) and citrate (through effects on kcat/KM). Its function is as follows. Phosphorylates 6-deoxy-6-sulfo-D-fructose (SF) to 6-deoxy-6-sulfo-D-fructose 1-phosphate (SFP). Cannot phosphorylate fructose 6-phosphate. The sequence is that of Sulfofructose kinase (yihV) from Escherichia coli (strain K12).